Reading from the N-terminus, the 537-residue chain is Glucocorticoid-induced transcript 1 protein (537 aa).

Disordered stretches follow at residues 1–45 (MSTA…APAA) and 62–254 (LLRG…HGNH). 4 positions are modified to phosphoserine: serine 69, serine 96, serine 98, and serine 99. The span at 69–86 (SPTRPAAAATAAAALGSL) shows a compositional bias: low complexity. Positions 97–106 (PSSPTPPPAA) are enriched in pro residues. The residue at position 101 (threonine 101) is a Phosphothreonine. A compositionally biased stretch (basic and acidic residues) spans 121–136 (RSPESRRRSSSPERRS). The segment covering 152–168 (IRTSSTIRRTSSLDTIT) has biased composition (low complexity). Serine 162 and serine 163 each carry phosphoserine. Phosphothreonine is present on residues threonine 166 and threonine 168. Residues 178–192 (RDPHVHYPSCMRDKA) are compositionally biased toward basic and acidic residues. Position 214 is a phosphoserine (serine 214). Positions 217-244 (SADQLKEIAKLRQQLQRSKQSSRHSKEK) form a coiled coil. Serine 248 carries the post-translational modification Phosphoserine. The residue at position 256 (threonine 256) is a Phosphothreonine. Serine 293 bears the Phosphoserine mark. The segment covering 309 to 321 (EVSKPLDIPDGRR) has biased composition (basic and acidic residues). Residues 309-407 (EVSKPLDIPD…KPNNSYMFKR (99 aa)) form a disordered region. The segment covering 329 to 346 (RSSSTRSIDTQTPSVQER) has biased composition (polar residues). Residue threonine 333 is modified to Phosphothreonine. Residue serine 335 is modified to Phosphoserine. Threonine 340 bears the Phosphothreonine mark. Positions 347–359 (SSSCSSHSPCVSP) are enriched in low complexity. Phosphoserine is present on residues serine 384, serine 388, serine 396, serine 402, and serine 470. Residues 495 to 520 (SLSDDTSTADSLEPSAQQPSQQQQLL) are disordered.

Predominantly expressed in thymus and testis, especially in CD4+CD8+ cells and at specific stages of spermatogenesis.

In Mus musculus (Mouse), this protein is Glucocorticoid-induced transcript 1 protein (Glcci1).